The following is a 79-amino-acid chain: UPF0150 protein ssr1765 (79 aa).

This sequence belongs to the UPF0150 family.

In Synechocystis sp. (strain ATCC 27184 / PCC 6803 / Kazusa), this protein is UPF0150 protein ssr1765.